The primary structure comprises 2521 residues: Partially reducing polyketide synthase tpeA (2521 aa).

Residues 7–434 enclose the Ketosynthase family 3 (KS3) domain; sequence DQSIAVIGLS…GSNAHAIIDN (428 aa). Positions 47-66 are disordered; sequence RWNSRRFQDDKNHSQNTSRT. Catalysis depends on for beta-ketoacyl synthase activity residues cysteine 180, histidine 315, and histidine 357. A Malonyl-CoA:ACP transacylase (MAT) domain is found at 554–855; the sequence is YVFTGQGAQW…LRGPVTQILQ (302 aa). Positions 948–1088 are N-terminal hotdog fold; that stretch reads SSFIGLPMPS…GLVTVEFEQL (141 aa). Residues 948–1258 enclose the PKS/mFAS DH domain; that stretch reads SSFIGLPMPS…CVEMPSTAGV (311 aa). The tract at residues 949–1256 is dehydratase (DH) domain; it reads SFIGLPMPSF…LTCVEMPSTA (308 aa). The interval 1100–1258 is C-terminal hotdog fold; it reads TTVQQAEAFY…CVEMPSTAGV (159 aa). In terms of domain architecture, Enoyl reductase (ER) spans 1809 to 2121; the sequence is GMLNTLCFQA…DNRHHGKITL (313 aa). The 178-residue stretch at 2146–2323 folds into the Ketoreductase (KR) domain; the sequence is TYLIAGGLGG…AVTIDLGIVK (178 aa). Residues 2433–2510 form the Carrier domain; that stretch reads DAVLFVTGAV…SFARDLVGKG (78 aa). Serine 2470 carries the post-translational modification O-(pantetheine 4'-phosphoryl)serine.

Requires pantetheine 4'-phosphate as cofactor.

The protein operates within secondary metabolite biosynthesis. Functionally, partially reducing polyketide synthase; part of the gene cluster that mediates the biosynthesis of polyesters containing 2,4-dihydroxy-6-(2-hydroxypropyl)benzoate and 3-hydroxybutyrate moieties, such as talapolyester G, 15G256beta and 15G256beta-2; as well as to oxidized derivatives such as 15G256alpha. The biosynthesis of the polyesters probably starts with the formation of the diketide 3-hydroxybutyryl-S-ACP catalyzed by the partially reducing polyketide synthase tpeA. The acceptance of 3-hydroxybutyryl by the non-reducing polyketide synthase tpeB would initiate further elongation and cyclization, catalyzed by KS and PT, respectively, to form 2,4-dihydroxy-6-(2-hydroxyn-propyl)benzoyl-S-ACP intermediate. The TE domain could catalyze lactonization at this step to yield 6-hydroxymellein as a derailment product. The polyesterification process maybe occurs when additional molecules of 3-hydroxybutyryl are transferred to tpeB. Following the first esterification step, an intramolecular cyclization catalyzed by the TE domain of tpeB would give talarodioxadione 1, whereas the ethyl esterification of talapolyester G perhaps happens spontaneously. Further oxidation by the cytochrome P450 monooxygenase tpeC then leads to the formation of oxidized derivatives. This chain is Partially reducing polyketide synthase tpeA, found in Talaromyces stipitatus (strain ATCC 10500 / CBS 375.48 / QM 6759 / NRRL 1006) (Penicillium stipitatum).